Reading from the N-terminus, the 464-residue chain is tRNA-2-methylthio-N(6)-dimethylallyladenosine synthase (464 aa).

The MTTase N-terminal domain occupies 19-135 (GSYWITTFGC…LENLLGKVDL (117 aa)). [4Fe-4S] cluster-binding residues include cysteine 28, cysteine 64, cysteine 98, cysteine 170, cysteine 174, and cysteine 177. Positions 156 to 394 (RESSICGWVN…DLVEKTARSR (239 aa)) constitute a Radical SAM core domain. The TRAM domain maps to 396–464 (KRYINNIESV…PFSLTGELYL (69 aa)).

Belongs to the methylthiotransferase family. MiaB subfamily. As to quaternary structure, monomer. The cofactor is [4Fe-4S] cluster.

It localises to the cytoplasm. The catalysed reaction is N(6)-dimethylallyladenosine(37) in tRNA + (sulfur carrier)-SH + AH2 + 2 S-adenosyl-L-methionine = 2-methylsulfanyl-N(6)-dimethylallyladenosine(37) in tRNA + (sulfur carrier)-H + 5'-deoxyadenosine + L-methionine + A + S-adenosyl-L-homocysteine + 2 H(+). Its function is as follows. Catalyzes the methylthiolation of N6-(dimethylallyl)adenosine (i(6)A), leading to the formation of 2-methylthio-N6-(dimethylallyl)adenosine (ms(2)i(6)A) at position 37 in tRNAs that read codons beginning with uridine. This is tRNA-2-methylthio-N(6)-dimethylallyladenosine synthase from Prochlorococcus marinus (strain AS9601).